Reading from the N-terminus, the 487-residue chain is Glycogen synthase 1 (487 aa).

Lysine 15 contributes to the ADP-alpha-D-glucose binding site.

The protein belongs to the glycosyltransferase 1 family. Bacterial/plant glycogen synthase subfamily.

It catalyses the reaction [(1-&gt;4)-alpha-D-glucosyl](n) + ADP-alpha-D-glucose = [(1-&gt;4)-alpha-D-glucosyl](n+1) + ADP + H(+). It functions in the pathway glycan biosynthesis; glycogen biosynthesis. In terms of biological role, synthesizes alpha-1,4-glucan chains using ADP-glucose. In Nitrosococcus oceani (strain ATCC 19707 / BCRC 17464 / JCM 30415 / NCIMB 11848 / C-107), this protein is Glycogen synthase 1.